Here is a 401-residue protein sequence, read N- to C-terminus: S-adenosylmethionine synthase (401 aa).

Histidine 16 provides a ligand contact to ATP. Aspartate 18 lines the Mg(2+) pocket. Glutamate 44 lines the K(+) pocket. L-methionine contacts are provided by glutamate 57 and glutamine 100. The tract at residues 100–110 (QSPDIAQGVNE) is flexible loop. ATP is bound by residues 174 to 176 (DAK), 241 to 242 (RF), aspartate 250, 256 to 257 (RK), alanine 273, and lysine 277. Aspartate 250 provides a ligand contact to L-methionine. Lysine 281 serves as a coordination point for L-methionine.

Belongs to the AdoMet synthase family. Homotetramer; dimer of dimers. Requires Mg(2+) as cofactor. The cofactor is K(+).

The protein localises to the cytoplasm. It catalyses the reaction L-methionine + ATP + H2O = S-adenosyl-L-methionine + phosphate + diphosphate. It functions in the pathway amino-acid biosynthesis; S-adenosyl-L-methionine biosynthesis; S-adenosyl-L-methionine from L-methionine: step 1/1. Its function is as follows. Catalyzes the formation of S-adenosylmethionine (AdoMet) from methionine and ATP. The overall synthetic reaction is composed of two sequential steps, AdoMet formation and the subsequent tripolyphosphate hydrolysis which occurs prior to release of AdoMet from the enzyme. This chain is S-adenosylmethionine synthase, found in Streptococcus equi subsp. zooepidemicus (strain H70).